The following is a 357-amino-acid chain: Thiamine thiazole synthase 1, chloroplastic (357 aa).

A chloroplast-targeting transit peptide spans 1 to 51 (MSISAAGVATGLGANVELKSNVGSSSSSVAGVRLFTSRKAQLRRCAAPATS). Substrate is bound by residues alanine 103, 123 to 124 (EQ), glycine 131, and alanine 196. Cysteine 225 is modified (2,3-didehydroalanine (Cys)). Residues aspartate 227, histidine 242, methionine 294, and 304-306 (RMG) contribute to the substrate site.

Belongs to the THI4 family. In terms of assembly, homooctamer. Fe cation is required as a cofactor. During the catalytic reaction, a sulfide is transferred from Cys-225 to a reaction intermediate, generating a dehydroalanine residue.

Its subcellular location is the plastid. The protein localises to the chloroplast. The catalysed reaction is [ADP-thiazole synthase]-L-cysteine + glycine + NAD(+) = [ADP-thiazole synthase]-dehydroalanine + ADP-5-ethyl-4-methylthiazole-2-carboxylate + nicotinamide + 3 H2O + 2 H(+). Involved in biosynthesis of the thiamine precursor thiazole. Catalyzes the conversion of NAD and glycine to adenosine diphosphate 5-(2-hydroxyethyl)-4-methylthiazole-2-carboxylic acid (ADT), an adenylated thiazole intermediate. The reaction includes an iron-dependent sulfide transfer from a conserved cysteine residue of the protein to a thiazole intermediate. The enzyme can only undergo a single turnover, which suggests it is a suicide enzyme. May have additional roles in adaptation to various stress conditions and in DNA damage tolerance. This chain is Thiamine thiazole synthase 1, chloroplastic, found in Physcomitrium patens (Spreading-leaved earth moss).